A 970-amino-acid polypeptide reads, in one-letter code: ATP-dependent DNA helicase DDX11 (970 aa).

A Helicase ATP-binding domain is found at 9 to 445; the sequence is GAIHFPFPFT…KNLMYLKQIL (437 aa). ATP is bound at residue 44–51; that stretch reads SPTGTGKS. The residue at position 262 (Ser-262) is a Phosphoserine. Positions 267 and 285 each coordinate [4Fe-4S] cluster. Over residues 289 to 304 the composition is skewed to basic and acidic residues; that stretch reads QRSRHEKKKGAEEEKP. Residues 289-312 are disordered; sequence QRSRHEKKKGAEEEKPKRRRQEKQ. Residues Cys-315 and Cys-350 each coordinate [4Fe-4S] cluster. The short motif at 393 to 396 is the DEAH box element; it reads DEAH. Residues 818 to 849 are disordered; the sequence is TLSPRPGTPREGSGGEPVHEGRQPVHRQGHQA.

Belongs to the DEAD box helicase family. DEAH subfamily. DDX11/CHL1 sub-subfamily. In terms of assembly, associates with the CTF18-RFC complex. Associates with a cohesin complex composed of RAD21, SMC1 proteins and SMC3. Interacts with CHTF18. Interacts with DSCC1. Interacts with FEN1; this interaction is direct and increases flap endonuclease activity of FEN1. Interacts with PCNA. Interacts with POLR1A and UBTF. Interacts with RAD21, SMC1 proteins and SMC3. Interacts with RFC2. Interacts with TIMELESS; this interaction increases recruitment of both proteins onto chromatin in response to replication stress induction by hydroxyurea. As to quaternary structure, (Microbial infection) Interacts with bovine papillomavirus type 1 regulatory protein E2; this interaction stimulates the recruitment of E2 onto mitotic chromosomes. Requires Mg(2+) as cofactor. It depends on [4Fe-4S] cluster as a cofactor. In terms of tissue distribution, expressed in melanoma cells. Not detected in epidermal melanocytes of normal skin (at protein level). Highly expressed in spleen, B-cells, thymus, testis, ovary, small intestine and pancreas. Very low expression seen in brain. Expressed in dividing cells and/or cells undergoing high levels of recombination. No expression detected in cells signaled to terminally differentiate. Expressed weakly in keratinocytes.

Its subcellular location is the nucleus. The protein localises to the nucleolus. It is found in the cytoplasm. The protein resides in the cytoskeleton. It localises to the spindle pole. Its subcellular location is the midbody. The protein localises to the microtubule organizing center. It is found in the centrosome. The protein resides in the chromosome. It carries out the reaction Couples ATP hydrolysis with the unwinding of duplex DNA at the replication fork by translocating in the 5'-3' direction. This creates two antiparallel DNA single strands (ssDNA). The leading ssDNA polymer is the template for DNA polymerase III holoenzyme which synthesizes a continuous strand.. The enzyme catalyses ATP + H2O = ADP + phosphate + H(+). Its activity is regulated as follows. ATPase activity is stimulated by high magnesium salt levels (up to a 0.1 M), and potassium salts (glutamate, chloride or acetate) are more effective than the corresponding sodium salts. ATPase activity is enhanced by the long non-coding RNA (lncRNA) cohesion regulator noncoding RNA (CONCR). Double-stranded DNA helicase activity is maximal with magnesium ions at low concentrations (0.5-1 mM) whereas is markedly inhibited at higher levels (5 mM and above). Double-stranded DNA helicase activity is stimulated by 25-50 mM potassium acetate, stimulated to a lesser extent by 25 mM of ammonium acetate, and markedly inhibited by sodium acetate. DNA-dependent ATPase and ATP-dependent DNA helicase that participates in various functions in genomic stability, including DNA replication, DNA repair and heterochromatin organization as well as in ribosomal RNA synthesis. Its double-stranded DNA helicase activity requires either a minimal 5'-single-stranded tail length of approximately 15 nt (flap substrates) or 10 nt length single-stranded gapped DNA substrates of a partial duplex DNA structure for helicase loading and translocation along DNA in a 5' to 3' direction. The helicase activity is capable of displacing duplex regions up to 100 bp, which can be extended up to 500 bp by the replication protein A (RPA) or the cohesion CTF18-replication factor C (Ctf18-RFC) complex activities. Also shows ATPase- and helicase activities on substrates that mimic key DNA intermediates of replication, repair and homologous recombination reactions, including forked duplex, anti-parallel G-quadruplex and three-stranded D-loop DNA molecules. Plays a role in DNA double-strand break (DSB) repair at the DNA replication fork during DNA replication recovery from DNA damage. Recruited with TIMELESS factor upon DNA-replication stress response at DNA replication fork to preserve replication fork progression, and hence ensure DNA replication fidelity. Also cooperates with TIMELESS factor during DNA replication to regulate proper sister chromatid cohesion and mitotic chromosome segregation. Stimulates 5'-single-stranded DNA flap endonuclease activity of FEN1 in an ATP- and helicase-independent manner; and hence it may contribute in Okazaki fragment processing at DNA replication fork during lagging strand DNA synthesis. Its ability to function at DNA replication fork is modulated by its binding to long non-coding RNA (lncRNA) cohesion regulator non-coding RNA DDX11-AS1/CONCR, which is able to increase both DDX11 ATPase activity and binding to DNA replicating regions. Also plays a role in heterochromatin organization. Involved in rRNA transcription activation through binding to active hypomethylated rDNA gene loci by recruiting UBTF and the RNA polymerase Pol I transcriptional machinery. Plays a role in embryonic development and prevention of aneuploidy. Involved in melanoma cell proliferation and survival. Associates with chromatin at DNA replication fork regions. Binds to single- and double-stranded DNAs. Functionally, (Microbial infection) Required for bovine papillomavirus type 1 regulatory protein E2 loading onto mitotic chromosomes during DNA replication for the viral genome to be maintained and segregated. This chain is ATP-dependent DNA helicase DDX11, found in Homo sapiens (Human).